The following is a 506-amino-acid chain: Maturase K (506 aa).

Belongs to the intron maturase 2 family. MatK subfamily.

It localises to the plastid. It is found in the chloroplast. Usually encoded in the trnK tRNA gene intron. Probably assists in splicing its own and other chloroplast group II introns. This chain is Maturase K, found in Trifolium incarnatum (Crimson clover).